Consider the following 432-residue polypeptide: UPF0597 protein APL_1605 (432 aa).

Belongs to the UPF0597 family.

The protein is UPF0597 protein APL_1605 of Actinobacillus pleuropneumoniae serotype 5b (strain L20).